An 85-amino-acid chain; its full sequence is Sec-independent protein translocase protein TatA (85 aa).

A helical transmembrane segment spans residues 1–21 (MGIFDWKHWLIILIVVVLVFG). Residues 43 to 85 (VNTEEGENRPAEPQTGTSAGDTLNKTQTIEGQAQKVDTPVRKD) form a disordered region. Polar residues predominate over residues 56–73 (QTGTSAGDTLNKTQTIEG).

The protein belongs to the TatA/E family. The Tat system comprises two distinct complexes: a TatABC complex, containing multiple copies of TatA, TatB and TatC subunits, and a separate TatA complex, containing only TatA subunits. Substrates initially bind to the TatABC complex, which probably triggers association of the separate TatA complex to form the active translocon.

Its subcellular location is the cell inner membrane. Its function is as follows. Part of the twin-arginine translocation (Tat) system that transports large folded proteins containing a characteristic twin-arginine motif in their signal peptide across membranes. TatA could form the protein-conducting channel of the Tat system. The protein is Sec-independent protein translocase protein TatA of Azotobacter vinelandii (strain DJ / ATCC BAA-1303).